The primary structure comprises 432 residues: T-box transcription factor T (432 aa).

A DNA-binding region (T-box) is located at residues 49–217; that stretch reads LWTRFKELTN…HNPFAKAFLD (169 aa). Residues 274 to 306 are disordered; that stretch reads CERYSSLRNHRSAPYPSPYTHRNNSPNNLADNS. Polar residues predominate over residues 293–306; the sequence is THRNNSPNNLADNS.

As to quaternary structure, when not bound to DNA, exists as a monomer. Binds DNA as a dimer. In terms of tissue distribution, expressed in presumptive mesodermal cells around the blastopore, and then in the notochord.

The protein localises to the nucleus. Involved in the transcriptional regulation of genes required for mesoderm formation and differentiation. Binds to the palindromic T site 5'-TTCACACCTAGGTGTGAA-3' DNA sequence. Causes dorsal mesodermal differentiation of animal cap ectoderm when co-expressed with wnt8 and noggin. None of these molecules causes dorsal mesoderm formation when expressed alone. Establishes the left/right axis at early gastrula stage by directly up-regulating mesodermal expression of zic3. The protein is T-box transcription factor T of Xenopus laevis (African clawed frog).